A 603-amino-acid polypeptide reads, in one-letter code: Glutathione-regulated potassium-efflux system protein KefB (603 aa).

13 helical membrane-spanning segments follow: residues 5-25 (ALLT…PIAA), 29-49 (IGAV…GLGF), 55-75 (AILH…GLEL), 87-107 (IFGV…GALY), 115-135 (SALI…LQLM), 152-172 (VLLF…ILAG), 180-202 (WERI…YLVR), 207-227 (FIAA…LVLG), 230-250 (LFME…GILL), 268-288 (GLLL…GILY), 291-311 (IVKI…VLYF), 326-346 (FAGV…AAAS), and 356-376 (PLLL…MQLI). The RCK N-terminal domain occupies 400–521 (EPQVIVVGFG…VRHFSRETFS (122 aa)).

This sequence belongs to the monovalent cation:proton antiporter 2 (CPA2) transporter (TC 2.A.37) family. KefB subfamily. In terms of assembly, interacts with the regulatory subunit KefG.

Its subcellular location is the cell inner membrane. Pore-forming subunit of a potassium efflux system that confers protection against electrophiles. Catalyzes K(+)/H(+) antiport. This is Glutathione-regulated potassium-efflux system protein KefB from Pectobacterium carotovorum subsp. carotovorum (strain PC1).